A 166-amino-acid polypeptide reads, in one-letter code: Phosphopantetheine adenylyltransferase (166 aa).

A substrate-binding site is contributed by S8. ATP-binding positions include 8–9 (SF) and H16. The substrate site is built by K40, T72, and R86. ATP-binding positions include 87 to 89 (GLR), E97, and 122 to 128 (HSFLSSS).

The protein belongs to the bacterial CoaD family. Homohexamer. Mg(2+) is required as a cofactor.

Its subcellular location is the cytoplasm. It catalyses the reaction (R)-4'-phosphopantetheine + ATP + H(+) = 3'-dephospho-CoA + diphosphate. The protein operates within cofactor biosynthesis; coenzyme A biosynthesis; CoA from (R)-pantothenate: step 4/5. Reversibly transfers an adenylyl group from ATP to 4'-phosphopantetheine, yielding dephospho-CoA (dPCoA) and pyrophosphate. This is Phosphopantetheine adenylyltransferase from Synechococcus sp. (strain RCC307).